The primary structure comprises 1052 residues: MEDSDFDDAELDELYEKAINRRVNETLIRRSLPVQRDLQNGVVPGQDTYYEEIRTEVTFGPTHHQLNEELLHSYIYPTNFEVRDYQFDIVRKGLLQNILCAIPTGMGKTFIASTVMLNFFRWTKTAKIIFTAPTRPLVAQQIKACLGITGIPHDQTAILLDKTRKNREEIWANKRVFFTTPQVVENDLKRGVLNPKDIVCLVIDEAHRATGSYAYANLVKFINRFNSSYRLLALTATPATDIEGVQEVVNNLNISKIEIRTEESMDIVKYMKKKIKDRVNIQTTVEIENIVEQLGIAILPVLNQAVELGIYESCPPSAINAFKAMQKSQAIIMNPSIPEGIKWRNYFILQLLNHVGQMLKRIKIYGIRTFFSYFQNKVKEFTTKYDLGKSTNKIAAGFYYHPMIQAITKECEEKIKDPNFLGHGKLEHLRDELTQFFYENPFESRVIIFTELRESALEIVKCIDSMENSEIRPHIFIGQAKGKEGFDEVKFVRKHGPKGRKKSDREKRLEEERRMDEEKKQAALQEKLERTSRRTGSSEEAQLSGMNQKQQKEVIKKFKSGLYNVLVCTSIGEEGLDIGEVDLIICYDTTSSPIKNIQRMGRTGRKRDGRIVLMFSSNEASKFDQSMNDYYNLQKLISQHLVQYRKSDRILPPENQEPECEKKFIEVSEEDQELNNMEDTDDVIRFATQCMLGKIPKTKKGRDKGKAKKGKTFFMPDNVITGIITANNLVRKRKSAQNGSGAALLDSIVNDDIDLEDEDGQVEILDVDQEVNRRLASNAVQKTNDMALQIRNEETPEIGDTRNKAKASSSMKVKKEPTMAVDHSDDEEDLPLSRHVERASRETAKEVPNATNVAEKPFPPLEFGVQRPSKRQRLQPEVQPEVQPEVQPEVQPEVQPEVQPEVTVKPEVKIKTEEGSKLYKNIFFSDEGFLQPHEKELFLSKYNPEDATVTIEPVPRFVRAHGRVKHSKRTEQLITLFEDMNHNRVARTIEMNKLRGIARRLHTVSQSQGQSNSQSQAHSTSQKSQQASQKDRSSQDKDLTNSELEDLLDSDF.

One can recognise a Helicase ATP-binding domain in the interval 89–256 (IVRKGLLQNI…EVVNNLNISK (168 aa)). 102–109 (IPTGMGKT) provides a ligand contact to ATP. Residues 204–207 (DEAH) carry the DEAH box motif. The 218-residue stretch at 432–649 (ELTQFFYENP…HLVQYRKSDR (218 aa)) folds into the Helicase C-terminal domain. Disordered stretches follow at residues 495–550 (HGPK…NQKQ), 798–832 (IGDT…DLPL), 869–898 (SKRQ…QPEV), and 1002–1052 (HTVS…DSDF). The span at 503-532 (SDREKRLEEERRMDEEKKQAALQEKLERTS) shows a compositional bias: basic and acidic residues. Residues 534–549 (RTGSSEEAQLSGMNQK) show a composition bias toward polar residues. Composition is skewed to low complexity over residues 875–898 (QPEV…QPEV) and 1005–1028 (SQSQ…QQAS). A compositionally biased stretch (basic and acidic residues) spans 1029–1040 (QKDRSSQDKDLT). Over residues 1043 to 1052 (ELEDLLDSDF) the composition is skewed to acidic residues.

It belongs to the DEAD box helicase family. DEAH subfamily. FANCM sub-subfamily. In terms of assembly, interacts with the MHF histone-fold complex to form the FANCM-MHF complex.

It is found in the nucleus. The enzyme catalyses ATP + H2O = ADP + phosphate + H(+). In terms of biological role, ATP-dependent DNA helicase involved in DNA damage repair by homologous recombination and in genome maintenance. Capable of unwinding D-loops. Plays a role in limiting crossover recombinants during mitotic DNA double-strand break (DSB) repair. Component of a FANCM-MHF complex which promotes gene conversion at blocked replication forks, probably by reversal of the stalled fork. The polypeptide is ATP-dependent DNA helicase MPH1 (Candida glabrata (strain ATCC 2001 / BCRC 20586 / JCM 3761 / NBRC 0622 / NRRL Y-65 / CBS 138) (Yeast)).